The following is a 124-amino-acid chain: Large ribosomal subunit protein bL12 (124 aa).

This sequence belongs to the bacterial ribosomal protein bL12 family. As to quaternary structure, homodimer. Part of the ribosomal stalk of the 50S ribosomal subunit. Forms a multimeric L10(L12)X complex, where L10 forms an elongated spine to which 2 to 4 L12 dimers bind in a sequential fashion. Binds GTP-bound translation factors.

Functionally, forms part of the ribosomal stalk which helps the ribosome interact with GTP-bound translation factors. Is thus essential for accurate translation. The polypeptide is Large ribosomal subunit protein bL12 (Nautilia profundicola (strain ATCC BAA-1463 / DSM 18972 / AmH)).